Reading from the N-terminus, the 396-residue chain is NADH-quinone oxidoreductase subunit D 1 (396 aa).

The protein belongs to the complex I 49 kDa subunit family. In terms of assembly, NDH-1 is composed of 14 different subunits. Subunits NuoB, C, D, E, F, and G constitute the peripheral sector of the complex.

The protein resides in the cell inner membrane. The enzyme catalyses a quinone + NADH + 5 H(+)(in) = a quinol + NAD(+) + 4 H(+)(out). In terms of biological role, NDH-1 shuttles electrons from NADH, via FMN and iron-sulfur (Fe-S) centers, to quinones in the respiratory chain. The immediate electron acceptor for the enzyme in this species is believed to be ubiquinone. Couples the redox reaction to proton translocation (for every two electrons transferred, four hydrogen ions are translocated across the cytoplasmic membrane), and thus conserves the redox energy in a proton gradient. The polypeptide is NADH-quinone oxidoreductase subunit D 1 (Beijerinckia indica subsp. indica (strain ATCC 9039 / DSM 1715 / NCIMB 8712)).